We begin with the raw amino-acid sequence, 209 residues long: Ribosomal RNA large subunit methyltransferase E (209 aa).

Positions 63, 65, 83, 99, and 124 each coordinate S-adenosyl-L-methionine. The active-site Proton acceptor is the lysine 164.

This sequence belongs to the class I-like SAM-binding methyltransferase superfamily. RNA methyltransferase RlmE family.

The protein localises to the cytoplasm. It carries out the reaction uridine(2552) in 23S rRNA + S-adenosyl-L-methionine = 2'-O-methyluridine(2552) in 23S rRNA + S-adenosyl-L-homocysteine + H(+). In terms of biological role, specifically methylates the uridine in position 2552 of 23S rRNA at the 2'-O position of the ribose in the fully assembled 50S ribosomal subunit. This chain is Ribosomal RNA large subunit methyltransferase E, found in Cronobacter sakazakii (strain ATCC BAA-894) (Enterobacter sakazakii).